The chain runs to 106 residues: UPF0060 membrane protein RL1530 (106 aa).

Transmembrane regions (helical) follow at residues 4 to 24 (IIFA…WAWL), 30 to 50 (VWWL…LTLV), 58 to 78 (TFAA…WLVE), and 86 to 106 (DIGG…APRG).

The protein belongs to the UPF0060 family.

Its subcellular location is the cell inner membrane. The polypeptide is UPF0060 membrane protein RL1530 (Rhizobium johnstonii (strain DSM 114642 / LMG 32736 / 3841) (Rhizobium leguminosarum bv. viciae)).